We begin with the raw amino-acid sequence, 168 residues long: Putative peroxiredoxin prxA (168 aa).

A Thioredoxin domain is found at 4-158 (LKAGDSFPAD…LEPAKNHLEF (155 aa)). Residue Cys-61 is the Cysteine sulfenic acid (-SOH) intermediate of the active site.

Belongs to the peroxiredoxin family. Prx5 subfamily. In terms of assembly, homodimer; disulfide-linked, upon oxidation. Interacts with thioredoxin trxA.

The enzyme catalyses a hydroperoxide + [thioredoxin]-dithiol = an alcohol + [thioredoxin]-disulfide + H2O. Thiol-specific peroxidase that catalyzes the reduction of hydrogen peroxide and organic hydroperoxides to water and alcohols, respectively. Plays a role in cell protection against oxidative stress by detoxifying peroxides and as sensor of hydrogen peroxide-mediated signaling events. Involved in osmoadaptation. In Emericella nidulans (strain FGSC A4 / ATCC 38163 / CBS 112.46 / NRRL 194 / M139) (Aspergillus nidulans), this protein is Putative peroxiredoxin prxA.